A 437-amino-acid polypeptide reads, in one-letter code: Phosphoribosylamine--glycine ligase (437 aa).

The ATP-grasp domain occupies 109–316 (KDFLARHGIP…LLDLIEAALN (208 aa)). 135 to 196 (VRQQGAPIVI…EEYLDGEEAS (62 aa)) lines the ATP pocket. Mg(2+) is bound by residues Glu-286 and Asn-288.

It belongs to the GARS family. Requires Mg(2+) as cofactor. Mn(2+) is required as a cofactor.

It catalyses the reaction 5-phospho-beta-D-ribosylamine + glycine + ATP = N(1)-(5-phospho-beta-D-ribosyl)glycinamide + ADP + phosphate + H(+). Its pathway is purine metabolism; IMP biosynthesis via de novo pathway; N(1)-(5-phospho-D-ribosyl)glycinamide from 5-phospho-alpha-D-ribose 1-diphosphate: step 2/2. In Xylella fastidiosa (strain 9a5c), this protein is Phosphoribosylamine--glycine ligase.